A 201-amino-acid chain; its full sequence is Cell division protein SepF (201 aa).

Residues 1 to 94 (MALKDLFSGF…TTSKNNARNV (94 aa)) form a disordered region. The span at 13–28 (VEEEDDELEAPPEENE) shows a compositional bias: acidic residues. A compositionally biased stretch (low complexity) spans 35 to 44 (PKQQAQSQNQ). Over residues 59 to 88 (SIQSVPKKQSTRLQQSSGERKYQMNNTTSK) the composition is skewed to polar residues.

It belongs to the SepF family. In terms of assembly, homodimer. Interacts with FtsZ.

It is found in the cytoplasm. Its function is as follows. Cell division protein that is part of the divisome complex and is recruited early to the Z-ring. Probably stimulates Z-ring formation, perhaps through the cross-linking of FtsZ protofilaments. Its function overlaps with FtsA. This Staphylococcus saprophyticus subsp. saprophyticus (strain ATCC 15305 / DSM 20229 / NCIMB 8711 / NCTC 7292 / S-41) protein is Cell division protein SepF.